A 201-amino-acid polypeptide reads, in one-letter code: 3-isopropylmalate dehydratase small subunit (201 aa).

It belongs to the LeuD family. LeuD type 1 subfamily. In terms of assembly, heterodimer of LeuC and LeuD.

The enzyme catalyses (2R,3S)-3-isopropylmalate = (2S)-2-isopropylmalate. Its pathway is amino-acid biosynthesis; L-leucine biosynthesis; L-leucine from 3-methyl-2-oxobutanoate: step 2/4. Catalyzes the isomerization between 2-isopropylmalate and 3-isopropylmalate, via the formation of 2-isopropylmaleate. The sequence is that of 3-isopropylmalate dehydratase small subunit from Glaesserella parasuis serovar 5 (strain SH0165) (Haemophilus parasuis).